Here is a 340-residue protein sequence, read N- to C-terminus: Phosphoribosylformylglycinamidine cyclo-ligase (340 aa).

Belongs to the AIR synthase family.

It is found in the cytoplasm. It catalyses the reaction 2-formamido-N(1)-(5-O-phospho-beta-D-ribosyl)acetamidine + ATP = 5-amino-1-(5-phospho-beta-D-ribosyl)imidazole + ADP + phosphate + H(+). It participates in purine metabolism; IMP biosynthesis via de novo pathway; 5-amino-1-(5-phospho-D-ribosyl)imidazole from N(2)-formyl-N(1)-(5-phospho-D-ribosyl)glycinamide: step 2/2. The protein is Phosphoribosylformylglycinamidine cyclo-ligase of Streptococcus pyogenes serotype M3 (strain ATCC BAA-595 / MGAS315).